Consider the following 340-residue polypeptide: Organic solute transporter subunit alpha (340 aa).

Over 1–48 (MEPGRTQIKLDPRYTADLLEVLKTNYGIPSACFSQPPTAAQLLRALGP) the chain is Extracellular. The chain crosses the membrane as a helical span at residues 49 to 69 (VELALTSILTLLALGSIAIFL). Topologically, residues 70–87 (EDAVYLYKNTLCPIKRRT) are cytoplasmic. The chain crosses the membrane as a helical span at residues 88–108 (LLWKSSAPTVVSVLCCFGLWI). Residues 109-118 (PRSLVLVEMT) lie on the Extracellular side of the membrane. The helical transmembrane segment at 119–139 (ITSFYAVCFYLLMLVMVEGFG) threads the bilayer. Residues 140 to 181 (GKEAVLRTLRDTPMMVHTGPCCCCCPCCPRLLLTRKKLQLLM) are Cytoplasmic-facing. Residues 182–202 (LGPFQYAFLKITLTLVGLFLV) form a helical membrane-spanning segment. Residues 203–218 (PDGIYDPADISEGSTA) are Extracellular-facing. A helical membrane pass occupies residues 219-239 (LWINTFLGVSTLLALWTLGII). Residues 240-255 (SRQARLHLGEQNMGAK) are Cytoplasmic-facing. The chain crosses the membrane as a helical span at residues 256–276 (FALFQVLLILTALQPSIFSVL). The Extracellular segment spans residues 277-294 (ANGGQIACSPPYSSKTRS). The chain crosses the membrane as a helical span at residues 295–317 (QVMNCHLLILETFLMTVLTRMYY). At 318–340 (RRKDHKVGYETFSSPDLDLNLKA) the chain is on the cytoplasmic side. Serine 330 carries the phosphoserine modification.

This sequence belongs to the OST-alpha family. In terms of assembly, interacts with SLC51B. The Ost-alpha/Ost-beta complex is a heterodimer composed of alpha (SLC51A) and beta (SLC51B) subunit. Widely expressed with a high expression in ileum. Expressed in testis, colon, liver, small intestine, kidney, ovary and adrenal gland; and at low levels in heart, lung, brain, pituitary, thyroid gland, uterus, prostate, mammary gland and fat.

The protein resides in the cell membrane. The protein localises to the endoplasmic reticulum membrane. The enzyme catalyses taurocholate(out) = taurocholate(in). It catalyses the reaction estrone 3-sulfate(out) = estrone 3-sulfate(in). It carries out the reaction dehydroepiandrosterone 3-sulfate(out) = dehydroepiandrosterone 3-sulfate(in). The catalysed reaction is tauroursodeoxycholate(out) = tauroursodeoxycholate(in). The enzyme catalyses glycoursodeoxycholate(out) = glycoursodeoxycholate(in). It catalyses the reaction glycocholate(out) = glycocholate(in). It carries out the reaction taurochenodeoxycholate(out) = taurochenodeoxycholate(in). The catalysed reaction is glycochenodeoxycholate(out) = glycochenodeoxycholate(in). The enzyme catalyses taurodeoxycholate(out) = taurodeoxycholate(in). It catalyses the reaction glycodeoxycholate(out) = glycodeoxycholate(in). It carries out the reaction prostaglandin E2(out) = prostaglandin E2(in). In terms of biological role, essential component of the Ost-alpha/Ost-beta complex, a heterodimer that acts as the intestinal basolateral transporter responsible for bile acid export from enterocytes into portal blood. Efficiently transports the major species of bile acids (taurocholate). Taurine conjugates are transported more efficiently across the basolateral membrane than glycine-conjugated bile acids. Can also transport steroids such as estrone 3-sulfate and dehydroepiandrosterone 3-sulfate, therefore playing a role in the enterohepatic circulation of sterols. Able to transport eicosanoids such as prostaglandin E2. The polypeptide is Organic solute transporter subunit alpha (SLC51A) (Homo sapiens (Human)).